The chain runs to 877 residues: Alanine--tRNA ligase (877 aa).

Zn(2+) contacts are provided by histidine 556, histidine 560, cysteine 657, and histidine 661.

The protein belongs to the class-II aminoacyl-tRNA synthetase family. Requires Zn(2+) as cofactor.

Its subcellular location is the cytoplasm. The catalysed reaction is tRNA(Ala) + L-alanine + ATP = L-alanyl-tRNA(Ala) + AMP + diphosphate. Catalyzes the attachment of alanine to tRNA(Ala) in a two-step reaction: alanine is first activated by ATP to form Ala-AMP and then transferred to the acceptor end of tRNA(Ala). Also edits incorrectly charged Ser-tRNA(Ala) and Gly-tRNA(Ala) via its editing domain. This chain is Alanine--tRNA ligase, found in Wolbachia pipientis wMel.